A 62-amino-acid chain; its full sequence is U10-hottentoxin-Hj2a (62 aa).

An N-terminal signal peptide occupies residues 1–22 (MQKLLIILILFCILKFNVDVEG). 3 disulfides stabilise this stretch: Cys-28–Cys-46, Cys-33–Cys-59, and Cys-37–Cys-61.

Belongs to the short scorpion toxin superfamily. Potassium channel inhibitor family. Alpha-KTx 23 subfamily. In terms of tissue distribution, expressed by the venom gland.

The protein localises to the secreted. In terms of biological role, may block potassium channels. This Hottentotta judaicus (Black scorpion) protein is U10-hottentoxin-Hj2a.